Reading from the N-terminus, the 283-residue chain is 4-diphosphocytidyl-2-C-methyl-D-erythritol kinase (283 aa).

The active site involves Lys-10. 99-109 (PMGGGLGGGSS) lines the ATP pocket. Residue Asp-141 is part of the active site.

Belongs to the GHMP kinase family. IspE subfamily. In terms of assembly, homodimer.

It carries out the reaction 4-CDP-2-C-methyl-D-erythritol + ATP = 4-CDP-2-C-methyl-D-erythritol 2-phosphate + ADP + H(+). Its pathway is isoprenoid biosynthesis; isopentenyl diphosphate biosynthesis via DXP pathway; isopentenyl diphosphate from 1-deoxy-D-xylulose 5-phosphate: step 3/6. Functionally, catalyzes the phosphorylation of the position 2 hydroxy group of 4-diphosphocytidyl-2C-methyl-D-erythritol. The protein is 4-diphosphocytidyl-2-C-methyl-D-erythritol kinase of Salmonella enteritidis PT4 (strain P125109).